The chain runs to 127 residues: Glycine cleavage system H protein 1 (127 aa).

Positions 20 to 101 (LLTVGITAYA…LGEAWFFRFR (82 aa)) constitute a Lipoyl-binding domain. Lys60 is modified (N6-lipoyllysine).

The protein belongs to the GcvH family. In terms of assembly, the glycine cleavage system is composed of four proteins: P, T, L and H. (R)-lipoate is required as a cofactor.

In terms of biological role, the glycine cleavage system catalyzes the degradation of glycine. The H protein shuttles the methylamine group of glycine from the P protein to the T protein. The sequence is that of Glycine cleavage system H protein 1 from Pseudomonas aeruginosa (strain ATCC 15692 / DSM 22644 / CIP 104116 / JCM 14847 / LMG 12228 / 1C / PRS 101 / PAO1).